A 64-amino-acid chain; its full sequence is Large ribosomal subunit protein uL29 (64 aa).

This sequence belongs to the universal ribosomal protein uL29 family.

The polypeptide is Large ribosomal subunit protein uL29 (Burkholderia mallei (strain NCTC 10247)).